We begin with the raw amino-acid sequence, 345 residues long: N-acetyl-gamma-glutamyl-phosphate reductase (345 aa).

Cys-149 is a catalytic residue.

The protein belongs to the NAGSA dehydrogenase family. Type 1 subfamily.

It is found in the cytoplasm. The catalysed reaction is N-acetyl-L-glutamate 5-semialdehyde + phosphate + NADP(+) = N-acetyl-L-glutamyl 5-phosphate + NADPH + H(+). It participates in amino-acid biosynthesis; L-arginine biosynthesis; N(2)-acetyl-L-ornithine from L-glutamate: step 3/4. In terms of biological role, catalyzes the NADPH-dependent reduction of N-acetyl-5-glutamyl phosphate to yield N-acetyl-L-glutamate 5-semialdehyde. The chain is N-acetyl-gamma-glutamyl-phosphate reductase from Janthinobacterium sp. (strain Marseille) (Minibacterium massiliensis).